A 247-amino-acid chain; its full sequence is Mannose-specific lectin CML-2 (247 aa).

A carbohydrate is bound by residues D87 and G107. N-linked (GlcNAc...) asparagine glycosylation occurs at N119. Positions 129 and 131 each coordinate Mn(2+). Ca(2+) is bound by residues D131 and F133. Residues S138 and N139 each coordinate a carbohydrate. 2 residues coordinate Ca(2+): N139 and D142. Residues D142 and H147 each contribute to the Mn(2+) site. 3 residues coordinate a carbohydrate: G221, E222, and Q223.

It belongs to the leguminous lectin family. As to quaternary structure, homodimer; non-covalently linked. Post-translationally, glycosylated.

Functionally, mannose-specific lectin. Also binds alpha-methyl-D-mannoside, D-glucose, N-acetyl-D-glucosamine and sucrose but not D-galactose, D-arabinose, D-fructose, D-xylose, lactose or glycoproteins fetiun, PSM and ovalbumin. Shows agglutinating activity towards rabbit erythrocytes. The chain is Mannose-specific lectin CML-2 from Centrolobium microchaete (Canarywood tree).